The primary structure comprises 93 residues: Large ribosomal subunit protein uL23cz/uL23cy (93 aa).

It belongs to the universal ribosomal protein uL23 family. As to quaternary structure, part of the 50S ribosomal subunit.

It localises to the plastid. The protein localises to the chloroplast. Functionally, binds to 23S rRNA. This Panax ginseng (Korean ginseng) protein is Large ribosomal subunit protein uL23cz/uL23cy (rpl23-A).